Reading from the N-terminus, the 1269-residue chain is DNA-directed RNA polymerase subunit beta (1269 aa).

The protein belongs to the RNA polymerase beta chain family. In terms of assembly, the RNAP catalytic core consists of 2 alpha, 1 beta, 1 beta' and 1 omega subunit. When a sigma factor is associated with the core the holoenzyme is formed, which can initiate transcription.

The catalysed reaction is RNA(n) + a ribonucleoside 5'-triphosphate = RNA(n+1) + diphosphate. In terms of biological role, DNA-dependent RNA polymerase catalyzes the transcription of DNA into RNA using the four ribonucleoside triphosphates as substrates. In Porphyromonas gingivalis (strain ATCC 33277 / DSM 20709 / CIP 103683 / JCM 12257 / NCTC 11834 / 2561), this protein is DNA-directed RNA polymerase subunit beta.